A 217-amino-acid chain; its full sequence is Small ribosomal subunit protein uS3 (217 aa).

One can recognise a KH type-2 domain in the interval I40–R110.

Belongs to the universal ribosomal protein uS3 family. In terms of assembly, part of the 30S ribosomal subunit. Forms a tight complex with proteins S10 and S14.

Binds the lower part of the 30S subunit head. Binds mRNA in the 70S ribosome, positioning it for translation. In Rickettsia canadensis (strain McKiel), this protein is Small ribosomal subunit protein uS3.